A 366-amino-acid polypeptide reads, in one-letter code: Phenylalanine dehydrogenase (366 aa).

NAD(+) is bound at residue Arg-45. Lys-69 is an L-phenylalanine binding site. Lys-81 is a catalytic residue. NAD(+)-binding positions include Asp-116, Thr-151, 181–187 (GVGKVGE), 204–205 (DI), 241–242 (AK), and 262–264 (SAN). Residue Asn-264 participates in L-phenylalanine binding.

Belongs to the Glu/Leu/Phe/Val dehydrogenases family.

The enzyme catalyses L-phenylalanine + NAD(+) + H2O = 3-phenylpyruvate + NH4(+) + NADH + H(+). It functions in the pathway amino-acid biosynthesis; L-phenylalanine biosynthesis; L-phenylalanine from phenylpyruvate (PDH route): step 1/1. Functionally, catalyzes the reversible NAD(+)-dependent oxidative deamination of L-phenylalanine to phenylpyruvate. This chain is Phenylalanine dehydrogenase, found in Thermoactinomyces intermedius.